We begin with the raw amino-acid sequence, 340 residues long: Lysophospholipase L2 (340 aa).

Its subcellular location is the cell inner membrane. It catalyses the reaction a 1-acyl-sn-glycero-3-phosphocholine + H2O = sn-glycerol 3-phosphocholine + a fatty acid + H(+). The polypeptide is Lysophospholipase L2 (pldB) (Escherichia coli O6:H1 (strain CFT073 / ATCC 700928 / UPEC)).